The following is a 308-amino-acid chain: Mitoferrin (308 aa).

6 helical membrane passes run 13–29 (GGSF…AGFA), 69–89 (ITGL…SHAV), 111–131 (IKVG…ASPM), 168–184 (YTTT…VYFA), 213–233 (LVAG…FDVV), and 285–302 (MVFH…YEYF). Solcar repeat units lie at residues 14–100 (GSFY…LKFK), 108–192 (HHPI…LKKI), and 207–305 (YQLI…FKFI).

The protein belongs to the mitochondrial carrier (TC 2.A.29) family.

It localises to the mitochondrion inner membrane. Mitochondrial solute carriers shuttle metabolites, nucleotides, and cofactors through the mitochondrial inner membrane. Mitochondrial iron transporter that mediates iron uptake. Probably required for heme synthesis of hemoproteins and Fe-S cluster assembly. This chain is Mitoferrin (mcfF), found in Dictyostelium discoideum (Social amoeba).